Here is a 258-residue protein sequence, read N- to C-terminus: Electron transfer flavoprotein beta subunit lysine methyltransferase (258 aa).

It belongs to the methyltransferase superfamily. ETFBKMT family.

It is found in the cytoplasm. Its subcellular location is the mitochondrion matrix. The catalysed reaction is L-lysyl-[protein] + 3 S-adenosyl-L-methionine = N(6),N(6),N(6)-trimethyl-L-lysyl-[protein] + 3 S-adenosyl-L-homocysteine + 3 H(+). In terms of biological role, protein-lysine methyltransferase that selectively trimethylates the flavoprotein ETFB in mitochondria. Thereby, may negatively regulate the function of ETFB in electron transfer from Acyl-CoA dehydrogenases to the main respiratory chain. In Danio rerio (Zebrafish), this protein is Electron transfer flavoprotein beta subunit lysine methyltransferase.